Consider the following 72-residue polypeptide: UPF0154 protein YneF (72 aa).

The helical transmembrane segment at 4–24 threads the bilayer; the sequence is WVGILVGVVALLIGVALGFFI.

This sequence belongs to the UPF0154 family.

It is found in the membrane. The sequence is that of UPF0154 protein YneF (yneF) from Bacillus subtilis (strain 168).